We begin with the raw amino-acid sequence, 429 residues long: Alanine aminotransferase (429 aa).

L-alanine-binding residues include Gly65 and Asn204. Residue Lys265 is modified to N6-(pyridoxal phosphate)lysine. Arg403 is a binding site for L-alanine.

Belongs to the class-I pyridoxal-phosphate-dependent aminotransferase family. In terms of assembly, homodimer. Pyridoxal 5'-phosphate serves as cofactor.

Its subcellular location is the cytoplasm. The enzyme catalyses L-alanine + 2-oxoglutarate = pyruvate + L-glutamate. This chain is Alanine aminotransferase (aspC), found in Mycobacterium bovis (strain ATCC BAA-935 / AF2122/97).